Here is a 293-residue protein sequence, read N- to C-terminus: Methylsterol monooxygenase 1 (293 aa).

The next 2 helical transmembrane spans lie at 55–75 (LIVH…FQFI) and 100–120 (GILF…YYFT). One can recognise a Fatty acid hydroxylase domain in the interval 144 to 274 (GCAVIEDTWH…FTWWDRIFGT (131 aa)). The Histidine box-1 motif lies at 157–161 (HRLLH). The Histidine box-2 signature appears at 170-174 (HKVHH). A helical transmembrane segment spans residues 199–219 (FFIGIVLLCDHVILLWAWVTM). Residues 249 to 255 (HHDFHHM) carry the Histidine box-3 motif.

This sequence belongs to the sterol desaturase family. Fe cation serves as cofactor. Post-translationally, ubiquitinated by MARCHF6, leading to proteasomal degradation.

Its subcellular location is the endoplasmic reticulum membrane. It carries out the reaction 4,4-dimethyl-5alpha-cholest-7-en-3beta-ol + 6 Fe(II)-[cytochrome b5] + 3 O2 + 5 H(+) = 4alpha-carboxy-4beta-methyl-5alpha-cholest-7-ene-3beta-ol + 6 Fe(III)-[cytochrome b5] + 4 H2O. The enzyme catalyses 4,4-dimethyl-5alpha-cholesta-8,24-dien-3beta-ol + 6 Fe(II)-[cytochrome b5] + 3 O2 + 5 H(+) = 4beta-methylzymosterol-4alpha-carboxylate + 6 Fe(III)-[cytochrome b5] + 4 H2O. It catalyses the reaction 4alpha-methylzymosterol + 6 Fe(II)-[cytochrome b5] + 3 O2 + 5 H(+) = 4alpha-carboxyzymosterol + 6 Fe(III)-[cytochrome b5] + 4 H2O. The catalysed reaction is 4alpha-methyl-5alpha-cholest-7-en-3beta-ol + 6 Fe(II)-[cytochrome b5] + 3 O2 + 5 H(+) = 4alpha-carboxy-5alpha-cholest-7-en-3beta-ol + 6 Fe(III)-[cytochrome b5] + 4 H2O. It carries out the reaction 4,4-dimethyl-5alpha-cholest-8-en-3beta-ol + 6 Fe(II)-[cytochrome b5] + 3 O2 + 5 H(+) = 4alpha-carboxy-4beta-methyl-5alpha-cholest-8-en-3beta-ol + 6 Fe(III)-[cytochrome b5] + 4 H2O. The enzyme catalyses 4alpha-methyl-5alpha-cholest-8-en-3beta-ol + 6 Fe(II)-[cytochrome b5] + 3 O2 + 5 H(+) = 4alpha-carboxy-5alpha-cholest-8-ene-3beta-ol + 6 Fe(III)-[cytochrome b5] + 4 H2O. It participates in steroid biosynthesis; zymosterol biosynthesis; zymosterol from lanosterol: step 3/6. It functions in the pathway steroid biosynthesis; cholesterol biosynthesis. Functionally, catalyzes the three-step monooxygenation required for the demethylation of 4,4-dimethyl and 4alpha-methylsterols, which can be subsequently metabolized to cholesterol. The polypeptide is Methylsterol monooxygenase 1 (Msmo1) (Rattus norvegicus (Rat)).